The primary structure comprises 341 residues: UDP-3-O-acylglucosamine N-acyltransferase (341 aa).

The Proton acceptor role is filled by histidine 239.

It belongs to the transferase hexapeptide repeat family. LpxD subfamily. In terms of assembly, homotrimer.

It catalyses the reaction a UDP-3-O-[(3R)-3-hydroxyacyl]-alpha-D-glucosamine + a (3R)-hydroxyacyl-[ACP] = a UDP-2-N,3-O-bis[(3R)-3-hydroxyacyl]-alpha-D-glucosamine + holo-[ACP] + H(+). It functions in the pathway bacterial outer membrane biogenesis; LPS lipid A biosynthesis. Catalyzes the N-acylation of UDP-3-O-acylglucosamine using 3-hydroxyacyl-ACP as the acyl donor. Is involved in the biosynthesis of lipid A, a phosphorylated glycolipid that anchors the lipopolysaccharide to the outer membrane of the cell. The polypeptide is UDP-3-O-acylglucosamine N-acyltransferase (Photobacterium profundum (strain SS9)).